The chain runs to 495 residues: 3-octaprenyl-4-hydroxybenzoate carboxy-lyase (495 aa).

Asn-172 provides a ligand contact to Mn(2+). Prenylated FMN-binding positions include 175-177, 189-191, and 194-195; these read IYR, RWL, and RG. A Mn(2+)-binding site is contributed by Glu-238. Catalysis depends on Asp-287, which acts as the Proton donor.

Belongs to the UbiD family. Homohexamer. Prenylated FMN is required as a cofactor. The cofactor is Mn(2+).

The protein localises to the cell membrane. The catalysed reaction is a 4-hydroxy-3-(all-trans-polyprenyl)benzoate + H(+) = a 2-(all-trans-polyprenyl)phenol + CO2. It participates in cofactor biosynthesis; ubiquinone biosynthesis. In terms of biological role, catalyzes the decarboxylation of 3-octaprenyl-4-hydroxy benzoate to 2-octaprenylphenol, an intermediate step in ubiquinone biosynthesis. The sequence is that of 3-octaprenyl-4-hydroxybenzoate carboxy-lyase from Marinobacter nauticus (strain ATCC 700491 / DSM 11845 / VT8) (Marinobacter aquaeolei).